The sequence spans 335 residues: N-acetyl-gamma-glutamyl-phosphate reductase (335 aa).

Cys-156 is a catalytic residue.

This sequence belongs to the NAGSA dehydrogenase family. Type 1 subfamily.

The protein localises to the cytoplasm. The catalysed reaction is N-acetyl-L-glutamate 5-semialdehyde + phosphate + NADP(+) = N-acetyl-L-glutamyl 5-phosphate + NADPH + H(+). It functions in the pathway amino-acid biosynthesis; L-arginine biosynthesis; N(2)-acetyl-L-ornithine from L-glutamate: step 3/4. Catalyzes the NADPH-dependent reduction of N-acetyl-5-glutamyl phosphate to yield N-acetyl-L-glutamate 5-semialdehyde. The sequence is that of N-acetyl-gamma-glutamyl-phosphate reductase from Tolumonas auensis (strain DSM 9187 / NBRC 110442 / TA 4).